The sequence spans 77 residues: Small ribosomal subunit protein uS17c (77 aa).

The protein belongs to the universal ribosomal protein uS17 family. In terms of assembly, part of the 30S ribosomal subunit.

It localises to the plastid. Its subcellular location is the chloroplast. One of the primary rRNA binding proteins, it binds specifically to the 5'-end of 16S ribosomal RNA. This is Small ribosomal subunit protein uS17c (rps17) from Cyanidium caldarium (Red alga).